We begin with the raw amino-acid sequence, 440 residues long: Xaa-Pro dipeptidase (440 aa).

Residues aspartate 244, aspartate 255, histidine 335, glutamate 380, and glutamate 419 each contribute to the Mn(2+) site.

This sequence belongs to the peptidase M24B family. Bacterial-type prolidase subfamily. Mn(2+) is required as a cofactor.

It carries out the reaction Xaa-L-Pro dipeptide + H2O = an L-alpha-amino acid + L-proline. Splits dipeptides with a prolyl residue in the C-terminal position. The protein is Xaa-Pro dipeptidase of Shewanella piezotolerans (strain WP3 / JCM 13877).